A 381-amino-acid chain; its full sequence is Acetylornithine deacetylase (381 aa).

His-79 lines the Zn(2+) pocket. Residue Asp-81 is part of the active site. Asp-111 contributes to the Zn(2+) binding site. Residue Glu-143 is part of the active site. 3 residues coordinate Zn(2+): Glu-144, Glu-168, and His-354.

This sequence belongs to the peptidase M20A family. ArgE subfamily. In terms of assembly, homodimer. It depends on Zn(2+) as a cofactor. Requires Co(2+) as cofactor. Glutathione is required as a cofactor.

Its subcellular location is the cytoplasm. It carries out the reaction N(2)-acetyl-L-ornithine + H2O = L-ornithine + acetate. It functions in the pathway amino-acid biosynthesis; L-arginine biosynthesis; L-ornithine from N(2)-acetyl-L-ornithine (linear): step 1/1. Its function is as follows. Catalyzes the hydrolysis of the amide bond of N(2)-acetylated L-amino acids. Cleaves the acetyl group from N-acetyl-L-ornithine to form L-ornithine, an intermediate in L-arginine biosynthesis pathway, and a branchpoint in the synthesis of polyamines. The protein is Acetylornithine deacetylase of Buchnera aphidicola subsp. Schizaphis graminum (strain Sg).